The chain runs to 445 residues: Cyclin-B1-2 (445 aa).

Belongs to the cyclin family. Cyclin AB subfamily. In terms of assembly, interacts with FZR2/CCS52A1, FZR1/CCS52A2 and FZR3/CCS52B. In terms of tissue distribution, expressed in roots, stems and flowers.

In terms of biological role, may induce mitotic cell division. The sequence is that of Cyclin-B1-2 (CYCB1-2) from Arabidopsis thaliana (Mouse-ear cress).